We begin with the raw amino-acid sequence, 465 residues long: Sensor histidine kinase ZraS (465 aa).

Over 1–14 the chain is Cytoplasmic; that stretch reads MSFIRLHKDAAATW. The helical transmembrane segment at 15-35 threads the bilayer; it reads LSRLLPAAIFILVGLFSIMVI. The Periplasmic portion of the chain corresponds to 36–202; it reads RDYGRESAAA…AATQAREWRN (167 aa). The helical transmembrane segment at 203 to 223 threads the bilayer; it reads TLIVLSALAAVLLATLLAFFW. The Cytoplasmic portion of the chain corresponds to 224–465; sequence HQRYQRSHRE…WLPVIARQQD (242 aa). Positions 253–461 constitute a Histidine kinase domain; it reads GVAHEIRNPL…VFTIWLPVIA (209 aa). Phosphohistidine; by autocatalysis is present on histidine 256.

In terms of processing, autophosphorylated.

The protein localises to the cell inner membrane. It carries out the reaction ATP + protein L-histidine = ADP + protein N-phospho-L-histidine.. Activity of the ZraS/ZraR two-component system is repressed by the zinc-bound form of ZraP, which probably interacts with the periplasmic region of ZraS. Functionally, part of the Zra signaling pathway, an envelope stress response (ESR) system composed of the periplasmic accessory protein ZraP, the histidine kinase ZraS and the transcriptional regulator ZraR. The ZraPSR system contributes to antibiotic resistance and is important for membrane integrity in the presence of membrane-targeting biocides. ZraS is a member of the two-component regulatory system ZraS/ZraR. Functions as a membrane-associated sensor kinase that phosphorylates ZraR in response to high concentrations of Zn(2+) or Pb(2+) in the medium. The sequence is that of Sensor histidine kinase ZraS from Salmonella typhimurium (strain LT2 / SGSC1412 / ATCC 700720).